The primary structure comprises 477 residues: Aspartyl/glutamyl-tRNA(Asn/Gln) amidotransferase subunit B (477 aa).

The protein belongs to the GatB/GatE family. GatB subfamily. Heterotrimer of A, B and C subunits.

It catalyses the reaction L-glutamyl-tRNA(Gln) + L-glutamine + ATP + H2O = L-glutaminyl-tRNA(Gln) + L-glutamate + ADP + phosphate + H(+). The catalysed reaction is L-aspartyl-tRNA(Asn) + L-glutamine + ATP + H2O = L-asparaginyl-tRNA(Asn) + L-glutamate + ADP + phosphate + 2 H(+). Functionally, allows the formation of correctly charged Asn-tRNA(Asn) or Gln-tRNA(Gln) through the transamidation of misacylated Asp-tRNA(Asn) or Glu-tRNA(Gln) in organisms which lack either or both of asparaginyl-tRNA or glutaminyl-tRNA synthetases. The reaction takes place in the presence of glutamine and ATP through an activated phospho-Asp-tRNA(Asn) or phospho-Glu-tRNA(Gln). The chain is Aspartyl/glutamyl-tRNA(Asn/Gln) amidotransferase subunit B from Ligilactobacillus salivarius (strain UCC118) (Lactobacillus salivarius).